The chain runs to 411 residues: Creatinase (411 aa).

His-240 is a catalytic residue.

Belongs to the peptidase M24 family. Creatinase subfamily. As to quaternary structure, homodimer.

The enzyme catalyses creatine + H2O = sarcosine + urea. The polypeptide is Creatinase (Bacillus sp. (strain B-0618)).